The primary structure comprises 357 residues: Gas vesicle ATPase GvpN (357 aa).

Residues A22–A36 show a composition bias toward polar residues. Positions A22–S43 are disordered. Residue G72–T79 coordinates ATP.

Belongs to the CbbQ/NirQ/NorQ/GpvN family. Forms homodimers, probably interacts with other GV proteins including GvpA.

Its subcellular location is the gas vesicle. The protein resides in the cytoplasm. It carries out the reaction ATP + H2O = ADP + phosphate + H(+). Functionally, an ATPase that functions in gas vesicle formation. A minor component of the gas vesicle, also found in soluble extracts. Gas vesicles (GV) are hollow, gas filled proteinaceous nanostructures. During planktonic growth they allow positioning of the organism at a favorable depth for light or nutrient acquisition. This chain is Gas vesicle ATPase GvpN, found in Ancylobacter aquaticus.